Consider the following 334-residue polypeptide: Protein CUP-SHAPED COTYLEDON 3 (334 aa).

In terms of domain architecture, NAC spans 22-171 (LPPGFRFHPT…EWVICRVFNK (150 aa)). A DNA-binding region spans residues 121 to 177 (VGMKKTLVFYKGRAPRGLKTKWVMHEYRLENDHSHRHTCKEEWVICRVFNKTGDRKN).

As to expression, in a general manner, present at the boundaries between mersitems and araising primordia.

It localises to the nucleus. Functionally, transcription activator. Involved in molecular mechanisms regulating shoot apical meristem (SAM) formation during embryogenesis and organ separation. Required for axillary meristem initiation and separation of the meristem from the main stem. May act as an inhibitor of cell division. This is Protein CUP-SHAPED COTYLEDON 3 (NAC031) from Arabidopsis thaliana (Mouse-ear cress).